Consider the following 539-residue polypeptide: Chaperonin GroEL (539 aa).

Residues 30–33 (TLGP), Lys-51, 87–91 (DGTTT), Gly-415, 479–481 (NAA), and Asp-495 contribute to the ATP site.

It belongs to the chaperonin (HSP60) family. As to quaternary structure, forms a cylinder of 14 subunits composed of two heptameric rings stacked back-to-back. Interacts with the co-chaperonin GroES.

The protein resides in the cytoplasm. The catalysed reaction is ATP + H2O + a folded polypeptide = ADP + phosphate + an unfolded polypeptide.. In terms of biological role, together with its co-chaperonin GroES, plays an essential role in assisting protein folding. The GroEL-GroES system forms a nano-cage that allows encapsulation of the non-native substrate proteins and provides a physical environment optimized to promote and accelerate protein folding. The polypeptide is Chaperonin GroEL (Enterobacter agglomerans (Erwinia herbicola)).